The sequence spans 221 residues: MQAFAVAALSIWLCLGATTLAESLAQSHGPQHCTSPNMTGVLTVMALNGGEIKATGHYHYDTTDKKLRFTESDMHLNKSEHLEDYLMLFEEGVFYDIDLKNQSCRKMSLQSHAHALELPAGAVHQVELFLGSDTVQEENIKVNIWMGSVPETKGQYSVSTTVGDCLPLSTFYSTDSITLLFSNSQVVTEVKEPEVFSLPSFCEGLELEDTHNDFFSIFNTV.

A signal peptide spans 1 to 21 (MQAFAVAALSIWLCLGATTLA). N-linked (GlcNAc...) asparagine glycosylation is found at Asn37, Asn77, and Asn101.

This sequence belongs to the ependymin family. As to quaternary structure, forms disulfide-linked dimers. Binds calcium through the terminal sialic acids. EPDs are synthesized in the meninx and secreted in the cerebrospinal fluid.

It is found in the secreted. Functionally, may play a role in neural plasticity. May be involved during axon regeneration. This chain is Ependymin (epd), found in Esox lucius (Northern pike).